The primary structure comprises 433 residues: Tol-Pal system protein TolB (433 aa).

The signal sequence occupies residues M1–A21.

This sequence belongs to the TolB family. The Tol-Pal system is composed of five core proteins: the inner membrane proteins TolA, TolQ and TolR, the periplasmic protein TolB and the outer membrane protein Pal. They form a network linking the inner and outer membranes and the peptidoglycan layer.

It localises to the periplasm. Its function is as follows. Part of the Tol-Pal system, which plays a role in outer membrane invagination during cell division and is important for maintaining outer membrane integrity. The polypeptide is Tol-Pal system protein TolB (Pseudomonas fluorescens (strain Pf0-1)).